Here is a 334-residue protein sequence, read N- to C-terminus: D-fructose 1,6-bisphosphatase class 2/sedoheptulose 1,7-bisphosphatase (334 aa).

4 residues coordinate Mn(2+): aspartate 33, glutamate 57, aspartate 85, and glutamate 88. Residues 88–90 (EGT), tyrosine 119, 164–166 (RAR), and 186–188 (DGD) each bind substrate. Glutamate 213 serves as a coordination point for Mn(2+).

The protein belongs to the FBPase class 2 family. In terms of assembly, homotetramer. Requires Mn(2+) as cofactor.

The enzyme catalyses beta-D-fructose 1,6-bisphosphate + H2O = beta-D-fructose 6-phosphate + phosphate. It catalyses the reaction D-sedoheptulose 1,7-bisphosphate + H2O = D-sedoheptulose 7-phosphate + phosphate. It functions in the pathway carbohydrate biosynthesis; Calvin cycle. Catalyzes the hydrolysis of fructose 1,6-bisphosphate (Fru 1,6-P2) and sedoheptulose 1,7-bisphosphate (Sed 1,7-P2) to fructose 6-phosphate and sedoheptulose 7-phosphate, respectively. In Synechococcus sp. (strain CC9902), this protein is D-fructose 1,6-bisphosphatase class 2/sedoheptulose 1,7-bisphosphatase.